Consider the following 167-residue polypeptide: Translationally-controlled tumor protein homolog (167 aa).

The TCTP domain maps to 1–167 (MLIYQDVLTG…WKDGLKEIKI (167 aa)).

It belongs to the TCTP family.

It is found in the cytoplasm. Its subcellular location is the cytoskeleton. Functionally, involved in protein synthesis. Involved in microtubule stabilization. The sequence is that of Translationally-controlled tumor protein homolog from Cryptococcus neoformans var. neoformans serotype D (strain B-3501A) (Filobasidiella neoformans).